Reading from the N-terminus, the 348-residue chain is Chaperone protein DnaJ (348 aa).

In terms of domain architecture, J spans 3 to 65; sequence DLYGILGVDH…EQRQRYDRHV (63 aa). The CR-type zinc-finger motif lies at 109-191; it reads GGSQVVKIDS…CYGNGSRSAP (83 aa). Positions 122, 125, 139, 142, 165, 168, 179, and 182 each coordinate Zn(2+). CXXCXGXG motif repeat units lie at residues 122 to 129, 139 to 146, 165 to 172, and 179 to 186; these read CDVCNGTR, CFDCNGSG, CSKCRGNG, and CRRCYGNG.

The protein belongs to the DnaJ family. Homodimer. Zn(2+) is required as a cofactor.

It is found in the cytoplasm. Its function is as follows. Participates actively in the response to hyperosmotic and heat shock by preventing the aggregation of stress-denatured proteins and by disaggregating proteins, also in an autonomous, DnaK-independent fashion. Unfolded proteins bind initially to DnaJ; upon interaction with the DnaJ-bound protein, DnaK hydrolyzes its bound ATP, resulting in the formation of a stable complex. GrpE releases ADP from DnaK; ATP binding to DnaK triggers the release of the substrate protein, thus completing the reaction cycle. Several rounds of ATP-dependent interactions between DnaJ, DnaK and GrpE are required for fully efficient folding. Also involved, together with DnaK and GrpE, in the DNA replication of plasmids through activation of initiation proteins. The polypeptide is Chaperone protein DnaJ (Tropheryma whipplei (strain Twist) (Whipple's bacillus)).